Reading from the N-terminus, the 178-residue chain is Inorganic pyrophosphatase (178 aa).

3 residues coordinate substrate: lysine 31, arginine 45, and tyrosine 57. Residues aspartate 67, aspartate 72, and aspartate 104 each contribute to the Mg(2+) site. Position 141 (tyrosine 141) interacts with substrate.

This sequence belongs to the PPase family. In terms of assembly, homohexamer. Requires Mg(2+) as cofactor.

It is found in the cytoplasm. It carries out the reaction diphosphate + H2O = 2 phosphate + H(+). Catalyzes the hydrolysis of inorganic pyrophosphate (PPi) forming two phosphate ions. The protein is Inorganic pyrophosphatase of Leptospira interrogans serogroup Icterohaemorrhagiae serovar copenhageni (strain Fiocruz L1-130).